Consider the following 362-residue polypeptide: MERITVTLGERSYPITIAAGLFNEPASFLPLKSGDQVMLVTNETLAPLYLDKVRGVLERAGVNVDSVILPDGEQYKSLTVLDTVFTALLKKPHGRDTTLVALGGGVIGDLTGFAAASYQRGVRFIQVPTTLLSQVDSSVGGKTAVNHPLGKNMIGAFYQPASVVVDLDCLKTLPARELASGLAEVIKYGIILDADFFTWLEENLDALLRLDGPAMAYCIRRCCELKAEVVAADEREAGLRALLNLGHTFGHAIEAEMGYGNWLHGEAVAAGIVMAARASERLGQFSSADTQRIIALLERAGLPVNGPCEMSAQDYLPHMLRDKKVLAGELRLVLPLAIGKSEVRGGVSHEVVLSAIADCQQA.

Residues 71 to 76, 105 to 109, 129 to 130, lysine 142, lysine 151, and 169 to 172 each bind NAD(+); these read DGEQYK, GVIGD, TT, and CLKT. 3 residues coordinate Zn(2+): glutamate 184, histidine 247, and histidine 264.

This sequence belongs to the sugar phosphate cyclases superfamily. Dehydroquinate synthase family. Requires Co(2+) as cofactor. Zn(2+) serves as cofactor. The cofactor is NAD(+).

The protein localises to the cytoplasm. It catalyses the reaction 7-phospho-2-dehydro-3-deoxy-D-arabino-heptonate = 3-dehydroquinate + phosphate. The protein operates within metabolic intermediate biosynthesis; chorismate biosynthesis; chorismate from D-erythrose 4-phosphate and phosphoenolpyruvate: step 2/7. In terms of biological role, catalyzes the conversion of 3-deoxy-D-arabino-heptulosonate 7-phosphate (DAHP) to dehydroquinate (DHQ). The polypeptide is 3-dehydroquinate synthase (Salmonella schwarzengrund (strain CVM19633)).